Here is a 225-residue protein sequence, read N- to C-terminus: Cytidylate kinase (225 aa).

11 to 19 (GPAAAGKST) is an ATP binding site.

The protein belongs to the cytidylate kinase family. Type 1 subfamily.

The protein localises to the cytoplasm. It catalyses the reaction CMP + ATP = CDP + ADP. The enzyme catalyses dCMP + ATP = dCDP + ADP. In Bacillus cereus (strain B4264), this protein is Cytidylate kinase.